An 847-amino-acid chain; its full sequence is Cancer-associated gene 1 protein homolog (847 aa).

The disordered stretch occupies residues 118 to 161 (EEKPELQSQVYNDPADASQKPDPLKEESLMESSTSENKDELVHE). The stretch at 377 to 567 (NVILEKNDIN…AAKREAQACT (191 aa)) forms a coiled coil.

The polypeptide is Cancer-associated gene 1 protein homolog (Cage1) (Rattus norvegicus (Rat)).